The primary structure comprises 152 residues: 3-hydroxyacyl-[acyl-carrier-protein] dehydratase FabZ (152 aa).

Residue histidine 58 is part of the active site.

The protein belongs to the thioester dehydratase family. FabZ subfamily.

The protein localises to the cytoplasm. The catalysed reaction is a (3R)-hydroxyacyl-[ACP] = a (2E)-enoyl-[ACP] + H2O. Functionally, involved in unsaturated fatty acids biosynthesis. Catalyzes the dehydration of short chain beta-hydroxyacyl-ACPs and long chain saturated and unsaturated beta-hydroxyacyl-ACPs. The sequence is that of 3-hydroxyacyl-[acyl-carrier-protein] dehydratase FabZ from Prochlorococcus marinus (strain MIT 9301).